Reading from the N-terminus, the 364-residue chain is Thebaine 6-O-demethylase (364 aa).

The 101-residue stretch at 214–314 (GTQAMRMNYY…RLSIATFHDP (101 aa)) folds into the Fe2OG dioxygenase domain. Y223 provides a ligand contact to 2-oxoglutarate. Positions 238, 240, and 295 each coordinate Fe cation. R305 and S307 together coordinate 2-oxoglutarate.

The protein belongs to the iron/ascorbate-dependent oxidoreductase family. L-ascorbate is required as a cofactor. Requires Fe cation as cofactor. As to expression, mainly expressed in stems and leaves and, to a lower extent, in capsules and roots.

It carries out the reaction thebaine + 2-oxoglutarate + O2 = neopinone + formaldehyde + succinate + CO2. The enzyme catalyses oripavine + 2-oxoglutarate + O2 = neomorphinone + formaldehyde + succinate + CO2. The catalysed reaction is (S)-canadine + S-adenosyl-L-methionine = (S)-cis-N-methylcanadine + S-adenosyl-L-homocysteine. It catalyses the reaction thebaine + 2-oxoglutarate + O2 = 6-O-demethylthebaine + formaldehyde + succinate + CO2 + H(+). It participates in alkaloid biosynthesis; morphine biosynthesis. Moderate substrate inhibition. Not inhibited in vitro by acylcyclohexanediones. Functionally, non-heme dioxygenase involved in biosynthesis of morphinan-type benzylisoquinoline and opiate alkaloids natural products. Mediates the conversion of thebaine to neopinone. Also catalyzes, with lower efficiency, the 6-O-demethylation of oripavine to neomorphinone, which is converted spontaneously to morphinone. Supports dealkylation reactions such as O,O-demethylenation in the metabolism of protopine, benzo[c]phenanthridine, and rhoeadine alkaloids; cleaves a methylenedioxy bridge leaving two hydroxyl groups. Catalyzes the O-demethylation of methylenedioxy bridges on protopine alkaloids such as allocryptopine. No activity with (S)-reticuline, salutaridine, papaverine, (S)-corytuberine, (S)-scoulerine, pavine, noscapine or codeine. In Papaver somniferum (Opium poppy), this protein is Thebaine 6-O-demethylase.